A 326-amino-acid chain; its full sequence is MSTKIAVLGGGAWGTALAAMAAKGGHESWLYARDAETVVAINKDRRNPRYLGDITLADGIRASTDAAAVVTGADAVLAVIPAQAMRNGLSELGTLIPQASPIVLCAKGIEQNTGRLMSEVVAEILPDHRIAALSGPSFASDVARGLPTAVTVACEDANTADRLAALLSGPAFRCYSTTDLKGVETGGALKNVLAIAAGAAIGRGYGASAQAALVTRGFAELRRIGQAMSARPETIMGLSGLGDLMLTCSSSQSRNYSYGLALGRGEDLTSRPLAEGVATAPIAAELCRKHNISAPIIDAVGALLDGKITIDEAVTALLNRPLKTED.

Residues tryptophan 13, arginine 33, and lysine 107 each contribute to the NADPH site. Sn-glycerol 3-phosphate contacts are provided by lysine 107, glycine 135, and serine 137. Alanine 139 contacts NADPH. 5 residues coordinate sn-glycerol 3-phosphate: lysine 190, aspartate 243, serine 253, arginine 254, and asparagine 255. The active-site Proton acceptor is lysine 190. Arginine 254 is an NADPH binding site. Positions 273 and 275 each coordinate NADPH.

Belongs to the NAD-dependent glycerol-3-phosphate dehydrogenase family.

The protein localises to the cytoplasm. The catalysed reaction is sn-glycerol 3-phosphate + NAD(+) = dihydroxyacetone phosphate + NADH + H(+). It catalyses the reaction sn-glycerol 3-phosphate + NADP(+) = dihydroxyacetone phosphate + NADPH + H(+). The protein operates within membrane lipid metabolism; glycerophospholipid metabolism. Its function is as follows. Catalyzes the reduction of the glycolytic intermediate dihydroxyacetone phosphate (DHAP) to sn-glycerol 3-phosphate (G3P), the key precursor for phospholipid synthesis. In Brucella abortus (strain 2308), this protein is Glycerol-3-phosphate dehydrogenase [NAD(P)+].